Reading from the N-terminus, the 253-residue chain is Flap endonuclease Xni (253 aa).

Asp105 provides a ligand contact to Mg(2+). In terms of domain architecture, 5'-3' exonuclease spans 162–251; that stretch reads ERHQLLDYIA…HLKLSDLRVN (90 aa). Positions 172, 181, 183, and 186 each coordinate K(+). An interaction with DNA region spans residues 185–190; it reads GIGPKS.

The protein belongs to the Xni family. The cofactor is Mg(2+). It depends on K(+) as a cofactor.

Its function is as follows. Has flap endonuclease activity. During DNA replication, flap endonucleases cleave the 5'-overhanging flap structure that is generated by displacement synthesis when DNA polymerase encounters the 5'-end of a downstream Okazaki fragment. In Shewanella amazonensis (strain ATCC BAA-1098 / SB2B), this protein is Flap endonuclease Xni.